Here is a 186-residue protein sequence, read N- to C-terminus: Translation initiation factor IF-3 (186 aa).

Positions 1–21 (MINRSSGKDRDRSRSGDKELR) are disordered.

Belongs to the IF-3 family. As to quaternary structure, monomer.

It localises to the cytoplasm. In terms of biological role, IF-3 binds to the 30S ribosomal subunit and shifts the equilibrium between 70S ribosomes and their 50S and 30S subunits in favor of the free subunits, thus enhancing the availability of 30S subunits on which protein synthesis initiation begins. The sequence is that of Translation initiation factor IF-3 from Borrelia turicatae (strain 91E135).